The chain runs to 1097 residues: RE1-silencing transcription factor (1097 aa).

The interaction with SIN3A stretch occupies residues 32-122; sequence DLHDLSKAEL…SLELSVVEPQ (91 aa). The interval 43–57 is interaction with SIN3B; it reads APQLIMLANVALTGE. Disordered regions lie at residues 83–103 and 127–159; these read NFSD…KGEP and ASGA…TKPF. Over residues 86-96 the composition is skewed to acidic residues; it reads DSEEGEGLEES. The tract at residues 145 to 418 is interaction with ZFP90; that stretch reads PGAEDKGKSS…KSKHPTCPNK (274 aa). A C2H2-type 1 zinc finger spans residues 159-181; that stretch reads FRCKPCQYEAESEEQFVHHIRVH. Positions 201–212 are required for binding to the neuron-restrictive silencer element; the sequence is SGSSTAEEGDFS. C2H2-type zinc fingers lie at residues 216–238, 248–270, 276–298, 304–326, 332–355, 361–383, and 389–412; these read IRCD…LKHH, YKCI…LRNH, YTCG…VRTH, YKCE…MRTH, FKCD…RQVH, LNCP…VELH, and FNCP…KSKH. A compositionally biased stretch (basic and acidic residues) spans 452 to 479; the sequence is KIKGDVAGKKNEKSVKAEKRDVSKEKKP. Disordered stretches follow at residues 452 to 642, 774 to 837, 853 to 938, and 961 to 1049; these read KIKG…MEGA, KEPV…EQVL, ESVS…NGKH, and GINS…NAKE. The segment covering 480-490 has biased composition (polar residues); sequence SNNVSVIQVTT. 2 stretches are compositionally biased toward basic and acidic residues: residues 495–504 and 559–570; these read SVTEVKEMDV and PKGDSKVEENKK. The span at 577-593 shows a compositional bias: basic residues; it reads KSTKKKTLKNKSSKKSS. A compositionally biased stretch (basic and acidic residues) spans 803–836; that stretch reads PPLHMEPISKKPPLRKDKKEKSNMQSERARKEQV. Serine 864 carries the post-translational modification Phosphoserine. Polar residues predominate over residues 913–930; that stretch reads INESTHISSSGQNLNTPE. Residue serine 971 is modified to Phosphoserine. The interaction with RCOR1 stretch occupies residues 1009-1087; it reads EGIHSHEGSD…HLNRHLVNVY (79 aa). The C2H2-type 9 zinc finger occupies 1060–1082; that stretch reads FVCIFCDRSFRKGKDYSKHLNRH.

As to quaternary structure, isoform 1 and isoform 3 form heterodimers. Isoform 3: Forms homodimers and homooligomers; binds to the neuron-restrictive silencer element (NRSE) as monomer. Interacts with SIN3A, SIN3B and RCOR1. Interacts with CDYL. Interacts with EHMT1 and EHMT2 only in the presence of CDYL. Part of a complex containing at least CDYL, REST, WIZ, SETB1, EHMT1 and EHMT2. Interacts (via zinc-finger DNA-binding domain) with ZFP90 (via N- and C-termini); the interaction inhibits REST repressor activity. Interacts (via C2H2-type zinc finger 5) with PRICKLE1. Interacts with FBXW11 and BTRC. Interacts with USP7. O-glycosylated. Post-translationally, phosphorylated; phosphorylation is required for ubiquitination. In terms of processing, ubiquitinated; ubiquitination is mediated by BTRC and leads to proteasomal degradation in G2 phase. Ubiquitination increases during neuronal differentiation. Deubiquitinated by USP7; leading to its stabilization and promoting the maintenance of neural progenitor cells. Expressed in neurons of the prefrontal cortex, in hippocampal pyramidal neurons, dentate gyrus granule neurons and cerebellar Purkinje and granule neurons (at protein level). Expressed in dopaminergic neurons of the substantia nigra (at protein level). Expressed in neural progenitor cells (at protein level). In patients suffering from Alzheimer disease, frontotemporal dementia or dementia with Lewy bodies, decreased nuclear levels have been observed in neurons of the prefrontal cortex and the hippocampus, but not in neurons of the dentate gyrus and cerebellum (at protein level). In patients with Parkinson disease or dementia with Lewy bodies, decreased nuclear levels have been observed in dopaminergic neurons and in cortical neurons and localization to Lewy bodies and pale bodies was detected (at protein level). Expressed at higher levels in weakly invasive breast cancer cell lines and at lower levels in highly invasive breast cancer lines (at protein level). Ubiquitous. Expressed at higher levels in the tissues of the lymphocytic compartment, including spleen, thymus, peripheral blood lymphocytes and ovary.

It is found in the nucleus. Its subcellular location is the cytoplasm. Its function is as follows. Transcriptional repressor which binds neuron-restrictive silencer element (NRSE) and represses neuronal gene transcription in non-neuronal cells. Restricts the expression of neuronal genes by associating with two distinct corepressors, SIN3A and RCOR1, which in turn recruit histone deacetylase to the promoters of REST-regulated genes. Mediates repression by recruiting the BHC complex at RE1/NRSE sites which acts by deacetylating and demethylating specific sites on histones, thereby acting as a chromatin modifier. Transcriptional repression by REST-CDYL via the recruitment of histone methyltransferase EHMT2 may be important in transformation suppression. Represses the expression of SRRM4 in non-neural cells to prevent the activation of neural-specific splicing events and to prevent production of REST isoform 3. Repressor activity may be inhibited by forming heterodimers with isoform 3, thereby preventing binding to NRSE or binding to corepressors and leading to derepression of target genes. Also maintains repression of neuronal genes in neural stem cells, and allows transcription and differentiation into neurons by dissociation from RE1/NRSE sites of target genes. Thereby is involved in maintaining the quiescent state of adult neural stem cells and preventing premature differentiation into mature neurons. Plays a role in the developmental switch in synaptic NMDA receptor composition during postnatal development, by repressing GRIN2B expression and thereby altering NMDA receptor properties from containing primarily GRIN2B to primarily GRIN2A subunits. Acts as a regulator of osteoblast differentiation. Key repressor of gene expression in hypoxia; represses genes in hypoxia by direct binding to an RE1/NRSE site on their promoter regions. May also function in stress resistance in the brain during aging; possibly by regulating expression of genes involved in cell death and in the stress response. Repressor of gene expression in the hippocampus after ischemia by directly binding to RE1/NRSE sites and recruiting SIN3A and RCOR1 to promoters of target genes, thereby promoting changes in chromatin modifications and ischemia-induced cell death. After ischemia, might play a role in repression of miR-132 expression in hippocampal neurons, thereby leading to neuronal cell death. Negatively regulates the expression of SRRM3 in breast cancer cell lines. In terms of biological role, binds to the 3' region of the neuron-restrictive silencer element (NRSE), with lower affinity than full-length REST isoform 1. Exhibits weaker repressor activity compared to isoform 1. May negatively regulate the repressor activity of isoform 1 by binding to isoform 1, thereby preventing its binding to NRSE and leading to derepression of target genes. However, in another study, does not appear to be implicated in repressor activity of a NRSE motif-containing reporter construct nor in inhibitory activity on the isoform 1 transcriptional repressor activity. Post-transcriptional inactivation of REST by SRRM4-dependent alternative splicing into isoform 3 is required in mechanosensory hair cells in the inner ear for derepression of neuronal genes and hearing. The chain is RE1-silencing transcription factor (REST) from Homo sapiens (Human).